Here is a 760-residue protein sequence, read N- to C-terminus: Ferric/cupric reductase transmembrane component 1 (760 aa).

Residues 1–18 form the signal peptide; that stretch reads MKIQQLIVFLFAVVLIDA. Topologically, residues 19–212 are extracellular; that stretch reads RTPKRYSELD…NNNFNLSINY (194 aa). Residues N78, N91, N111, N143, N155, and N207 are each glycosylated (N-linked (GlcNAc...) asparagine). The tract at residues 119–177 is disordered; sequence TTKSSSGSKTSASASKSSKSTGSSNASKSSTNAHGSNSSTSSTSSSSSKSGKGNSGTST. A helical transmembrane segment spans residues 213-233; sequence GSGLLGYWAGILAIAIFANMI. Residues 234 to 288 are Cytoplasmic-facing; it reads KKMFPSLTNYLSGSISNLFRKHLFLPATFRKKKAQEFSIGVYGFFDGLIPTRLET. The chain crosses the membrane as a helical span at residues 289–309; sequence IIVVIFVVLTGLFSALHIHHV. At 310–324 the chain is on the extracellular side; sequence KDNPQYATKNAELGH. Residues 325–345 form a helical membrane-spanning segment; it reads LIADRTGILGTFLIPLLILFG. A Ferric oxidoreductase domain is found at 330-445; the sequence is TGILGTFLIP…HIVLVVFFVV (116 aa). Over 346 to 371 the chain is Cytoplasmic; sequence GRNNFLQWLTGWDFATFIMYHRWISR. Heme is bound by residues H366 and H380. A helical transmembrane segment spans residues 372–392; it reads VDVLLIIVHAITFSVSDKATG. Topologically, residues 393 to 403 are extracellular; the sequence is KYNTRMKRDFM. Residues 404–424 traverse the membrane as a helical segment; sequence IWGTVSTICGGFILFQAMLFF. Residues 425–430 are Cytoplasmic-facing; sequence RRKCYE. A helical transmembrane segment spans residues 431-451; sequence VFFLIHIVLVVFFVVGGYYHL. Heme-binding residues include H436 and H450. At 452–760 the chain is on the extracellular side; it reads ESQGYGDFMW…EYHEQLQTWA (309 aa). The FAD-binding FR-type domain maps to 465–583; it reads AVWAFDRVVR…EGPYGEPSSA (119 aa). 575–578 contacts NADP(+); sequence GPYG. Residue N615 is glycosylated (N-linked (GlcNAc...) asparagine). 726–727 serves as a coordination point for NADP(+); the sequence is CG. N744 carries N-linked (GlcNAc...) asparagine glycosylation.

Belongs to the ferric reductase (FRE) family. FAD serves as cofactor. Requires heme as cofactor.

The protein localises to the cell membrane. It carries out the reaction 2 a Fe(II)-siderophore + NADP(+) + H(+) = 2 a Fe(III)-siderophore + NADPH. Functionally, ferric reductase responsible for reducing extracellular iron and copper prior to import. Catalyzes the reductive uptake of Fe(3+)-salts and Fe(3+) bound to catecholate or hydroxamate siderophores. Fe(3+) is reduced to Fe(2+), which then dissociates from the siderophore and can be imported by the high-affinity Fe(2+) transport complex in the plasma membrane. Also participates in Cu(2+) reduction and Cu(+) uptake. Involved in maintenance of cell wall integrity (CWI), mitochondrial function, and interaction between the pathogen and the host. This chain is Ferric/cupric reductase transmembrane component 1, found in Candida albicans (strain SC5314 / ATCC MYA-2876) (Yeast).